The primary structure comprises 241 residues: ATP synthase subunit 4, mitochondrial (241 aa).

The N-terminal 35 residues, 1-35 (MASRLARTAVGAARLRPSVVPRVLPALSTVASPRY), are a transit peptide targeting the mitochondrion.

Belongs to the eukaryotic ATPase B chain family. F-type ATPases have 2 components, CF(1) - the catalytic core - and CF(0) - the membrane proton channel. In yeast, the dimeric form of ATP synthase consists of 17 polypeptides: alpha, beta, gamma, delta, epsilon, 4 (B), 5 (OSCP), 6 (A), 8, 9 (C), d, E (Tim11), f, g, h, i/j and k.

The protein localises to the mitochondrion. It is found in the mitochondrion inner membrane. Its function is as follows. Mitochondrial membrane ATP synthase (F(1)F(0) ATP synthase or Complex V) produces ATP from ADP in the presence of a proton gradient across the membrane which is generated by electron transport complexes of the respiratory chain. F-type ATPases consist of two structural domains, F(1) - containing the extramembraneous catalytic core, and F(0) - containing the membrane proton channel, linked together by a central stalk and a peripheral stalk. During catalysis, ATP synthesis in the catalytic domain of F(1) is coupled via a rotary mechanism of the central stalk subunits to proton translocation. Part of the complex F(0) domain and the peripheric stalk, which acts as a stator to hold the catalytic alpha(3)beta(3) subcomplex and subunit a/atp6 static relative to the rotary elements. The chain is ATP synthase subunit 4, mitochondrial (atp-3) from Neurospora crassa (strain ATCC 24698 / 74-OR23-1A / CBS 708.71 / DSM 1257 / FGSC 987).